The primary structure comprises 136 residues: uncharacterized protein (136 aa).

Residues 40 to 62 (LFYSISLCVSLLLHISLCVSVYV) form a helical membrane-spanning segment.

It is found in the membrane. This is an uncharacterized protein from Homo sapiens (Human).